Here is a 56-residue protein sequence, read N- to C-terminus: Large ribosomal subunit protein eL40 (56 aa).

The protein belongs to the eukaryotic ribosomal protein eL40 family.

The polypeptide is Large ribosomal subunit protein eL40 (Sulfurisphaera tokodaii (strain DSM 16993 / JCM 10545 / NBRC 100140 / 7) (Sulfolobus tokodaii)).